We begin with the raw amino-acid sequence, 362 residues long: uncharacterized protein (362 aa).

The next 7 helical transmembrane spans lie at 32 to 52, 75 to 95, 106 to 126, 148 to 168, 176 to 196, 287 to 307, and 329 to 349; these read GAGWACGVTVVLTPPGTVGAV, FVDAVLLAGGSAYGLAAADGV, VVMLGGVVPIVPGAVIFDLSV, AAVGGQDATVAVGTVGAGVGA, GVGTASITLESGPTVGAVVVV, VFALATGAVEATATADVPVAM, and VLVAVLAAESVAGIPTYCGMF.

It belongs to the peptidase S58 family.

Its subcellular location is the cell membrane. Functionally, aminopeptidase. This is an uncharacterized protein from Mycobacterium leprae (strain TN).